A 566-amino-acid polypeptide reads, in one-letter code: Protein OBERON 1 (566 aa).

Over residues 1 to 10 (MGTSSGSNLP) the composition is skewed to polar residues. Residues 1 to 79 (MGTSSGSNLP…KTGPDSHDQH (79 aa)) are disordered. Residues 18-29 (QQLQTSLSLVSS) are compositionally biased toward low complexity. A compositionally biased stretch (polar residues) spans 47–60 (ESASSQETWPTSKS). Basic and acidic residues predominate over residues 64-79 (RKTDSGKTGPDSHDQH). Residues 225-289 (LCMCVICNKF…LFKCRACNHT (65 aa)) form a PHD-type zinc finger. Residues 407–522 (EEKTRMYKKA…LFEKIKEQES (116 aa)) are a coiled coil. The tract at residues 545–566 (YNASSPRVDPRSNQRNPFRSNP) is disordered. The segment covering 555-566 (RSNQRNPFRSNP) has biased composition (polar residues).

In terms of assembly, self-interacts. Interacts with OBE2, OBE3 and OBE4. Binds to VPg of pea seed borne mosaic virus (PSbMV), turnip mosaic virus (TuMV) and lettuce mosaic virus (LMV), but not with VPg of tobacco etch virus (TEV), cowpea mosaic virus (CPMV), tomato black ring virus (TBRV) and grapevine fan leaf virus (GFLV). Interacts with RBL. In terms of tissue distribution, expressed in roots, seedlings, stems, leaves, flowers and siliques, especially in the vasculature.

It is found in the nucleus. Its subcellular location is the nucleoplasm. In terms of biological role, probable transcription factor that acts together with OBE2 for the maintenance and/or establishment of both the shoot and root meristems, probably by controlling the expression of the meristem genes such as WUS, PLT1 and PLT2 and of genes required for auxin responses. Promotes cell meristematic activity via the WUSCHEL-CLAVATA pathway. Involved in the development of the basal pole and in auxin-mediated root and vascular development in the embryo. Confers sensitivity to turnip mosaic virus (TuMV) probably by promoting viral movement and multiplication via interaction with TuMV VPg. In Arabidopsis thaliana (Mouse-ear cress), this protein is Protein OBERON 1.